A 475-amino-acid polypeptide reads, in one-letter code: Ribulose bisphosphate carboxylase large chain (475 aa).

Positions 1-2 (MA) are excised as a propeptide. Pro3 is subject to N-acetylproline. The substrate site is built by Asn123 and Thr173. The active-site Proton acceptor is Lys175. Substrate is bound at residue Lys177. Mg(2+) contacts are provided by Lys201, Asp203, and Glu204. Position 201 is an N6-carboxylysine (Lys201). His294 (proton acceptor) is an active-site residue. Substrate is bound by residues Arg295, His327, and Ser379.

This sequence belongs to the RuBisCO large chain family. Type I subfamily. As to quaternary structure, heterohexadecamer of 8 large chains and 8 small chains. Mg(2+) serves as cofactor.

The protein localises to the plastid. It is found in the chloroplast. It catalyses the reaction 2 (2R)-3-phosphoglycerate + 2 H(+) = D-ribulose 1,5-bisphosphate + CO2 + H2O. The catalysed reaction is D-ribulose 1,5-bisphosphate + O2 = 2-phosphoglycolate + (2R)-3-phosphoglycerate + 2 H(+). RuBisCO catalyzes two reactions: the carboxylation of D-ribulose 1,5-bisphosphate, the primary event in carbon dioxide fixation, as well as the oxidative fragmentation of the pentose substrate in the photorespiration process. Both reactions occur simultaneously and in competition at the same active site. The protein is Ribulose bisphosphate carboxylase large chain of Ostreococcus tauri.